The following is an 82-amino-acid chain: Small ribosomal subunit protein bS18 (82 aa).

This sequence belongs to the bacterial ribosomal protein bS18 family. In terms of assembly, part of the 30S ribosomal subunit. Forms a tight heterodimer with protein bS6.

Functionally, binds as a heterodimer with protein bS6 to the central domain of the 16S rRNA, where it helps stabilize the platform of the 30S subunit. The protein is Small ribosomal subunit protein bS18 of Bifidobacterium longum (strain NCC 2705).